The chain runs to 210 residues: Riboflavin kinase (210 aa).

The span at 1–11 shows a compositional bias: pro residues; it reads MRPSNPRPPVT. Residues 1 to 24 form a disordered region; it reads MRPSNPRPPVTGPDSGPEAPFPIR. Positions 44 and 46 each coordinate Mg(2+). Glu113 acts as the Nucleophile in catalysis.

This sequence belongs to the flavokinase family. Zn(2+) serves as cofactor. Requires Mg(2+) as cofactor.

It carries out the reaction riboflavin + ATP = FMN + ADP + H(+). The protein operates within cofactor biosynthesis; FMN biosynthesis; FMN from riboflavin (ATP route): step 1/1. Its function is as follows. Catalyzes the phosphorylation of riboflavin (vitamin B2) to form flavin mononucleotide (FMN) coenzyme. The protein is Riboflavin kinase (fmn1) of Emericella nidulans (strain FGSC A4 / ATCC 38163 / CBS 112.46 / NRRL 194 / M139) (Aspergillus nidulans).